Consider the following 319-residue polypeptide: Ferrochelatase (319 aa).

Fe cation contacts are provided by H194 and E275.

This sequence belongs to the ferrochelatase family.

Its subcellular location is the cytoplasm. The catalysed reaction is heme b + 2 H(+) = protoporphyrin IX + Fe(2+). The protein operates within porphyrin-containing compound metabolism; protoheme biosynthesis; protoheme from protoporphyrin-IX: step 1/1. Functionally, catalyzes the ferrous insertion into protoporphyrin IX. This chain is Ferrochelatase, found in Vibrio vulnificus (strain YJ016).